The primary structure comprises 334 residues: uncharacterized protein (334 aa).

It belongs to the ADP-ribosylglycohydrolase family.

This is an uncharacterized protein from Escherichia coli (strain K12).